We begin with the raw amino-acid sequence, 88 residues long: Sec-independent protein translocase protein TatA (88 aa).

A helical transmembrane segment spans residues 1–21 (MGGASIWHWIVVGVIVMLLFG). Residues 62–88 (TEPVRTLPPHPTEPAPATHATVDRKVV) are disordered.

It belongs to the TatA/E family. In terms of assembly, the Tat system comprises two distinct complexes: a TatABC complex, containing multiple copies of TatA, TatB and TatC subunits, and a separate TatA complex, containing only TatA subunits. Substrates initially bind to the TatABC complex, which probably triggers association of the separate TatA complex to form the active translocon.

Its subcellular location is the cell inner membrane. Its function is as follows. Part of the twin-arginine translocation (Tat) system that transports large folded proteins containing a characteristic twin-arginine motif in their signal peptide across membranes. TatA could form the protein-conducting channel of the Tat system. This Methylobacterium sp. (strain 4-46) protein is Sec-independent protein translocase protein TatA.